The chain runs to 122 residues: Large ribosomal subunit protein uL14 (122 aa).

This sequence belongs to the universal ribosomal protein uL14 family. Part of the 50S ribosomal subunit. Forms a cluster with proteins L3 and L19. In the 70S ribosome, L14 and L19 interact and together make contacts with the 16S rRNA in bridges B5 and B8.

Functionally, binds to 23S rRNA. Forms part of two intersubunit bridges in the 70S ribosome. The protein is Large ribosomal subunit protein uL14 of Caulobacter sp. (strain K31).